A 414-amino-acid polypeptide reads, in one-letter code: MLFRGTSLAYSLLVISFLTPRSSAGQNCLTKSLEDVVIDIQSSLSKGIRGNEPIHLATQEDCIGACCSTKDIAGDKACNLMIFDTRKTDRQPNCYLFFCPSEDACPLKPAKGLVTYRLIRDFPLTSANSSLQQLTQGEFLLLDHSSPGATPGFRTPAGYPKPTGLSWSDRSSLKSTAPLHLRKHIKADETSMQLPEEKSHSQSLQLPSELKMAHLLPKTVPTPPTTVAVAPLRNVSATLKPELLLTSISVTAKTLKQKEATTASPVTTVTSKLPGVPGSTSFTPVVTHQAALTNTFQAHTDSKGILETMPFQGGSTLTSDPRHGKSSTSESSITNKTASWEDRRVSVGSASLNKGPKSQHGLSFEKWLLIGTLLCGVLFLVIGLVLLGRMLVEALRRKRYSRLDYLINGIYVDI.

The first 24 residues, 1-24 (MLFRGTSLAYSLLVISFLTPRSSA), serve as a signal peptide directing secretion. The Extracellular portion of the chain corresponds to 25–369 (GQNCLTKSLE…HGLSFEKWLL (345 aa)). Positions 32 to 116 (SLEDVVIDIQ…LKPAKGLVTY (85 aa)) constitute an MANSC domain. Residues N128, N234, and N335 are each glycosylated (N-linked (GlcNAc...) asparagine). The disordered stretch occupies residues 311 to 339 (FQGGSTLTSDPRHGKSSTSESSITNKTAS). Residues 326-338 (SSTSESSITNKTA) are compositionally biased toward polar residues. Residues 370–392 (IGTLLCGVLFLVIGLVLLGRMLV) form a helical membrane-spanning segment. At 393–414 (EALRRKRYSRLDYLINGIYVDI) the chain is on the cytoplasmic side.

The protein localises to the membrane. This is MANSC domain-containing protein 1 (Mansc1) from Mus musculus (Mouse).